A 189-amino-acid chain; its full sequence is Protein GrpE (189 aa).

Residues methionine 1–leucine 13 show a composition bias toward polar residues. The interval methionine 1–asparagine 35 is disordered.

It belongs to the GrpE family. In terms of assembly, homodimer.

The protein resides in the cytoplasm. In terms of biological role, participates actively in the response to hyperosmotic and heat shock by preventing the aggregation of stress-denatured proteins, in association with DnaK and GrpE. It is the nucleotide exchange factor for DnaK and may function as a thermosensor. Unfolded proteins bind initially to DnaJ; upon interaction with the DnaJ-bound protein, DnaK hydrolyzes its bound ATP, resulting in the formation of a stable complex. GrpE releases ADP from DnaK; ATP binding to DnaK triggers the release of the substrate protein, thus completing the reaction cycle. Several rounds of ATP-dependent interactions between DnaJ, DnaK and GrpE are required for fully efficient folding. This chain is Protein GrpE, found in Polaromonas naphthalenivorans (strain CJ2).